Consider the following 229-residue polypeptide: MSERSPVITVDGPSGAGKGTICQLLAQHLGWHLLDSGAIYRVLALAAIHHDVELENEEALTLLAAHLDVQFLTGTEADAIKVILEGEDVTTTIRTQECSNAASKVAALPRVREALLRRQRAFSAAPGLVADGRDMGTVVFSKAPVKIFLTASAEERAQRRYNQLQDKGFDVKIDRLLAEIIERDDRDTNRAASPLVPADDALVIDTSGIGIEDVLKQVLEYVGQKITVT.

12-20 (GPSGAGKGT) contributes to the ATP binding site.

It belongs to the cytidylate kinase family. Type 1 subfamily.

It localises to the cytoplasm. The enzyme catalyses CMP + ATP = CDP + ADP. The catalysed reaction is dCMP + ATP = dCDP + ADP. The sequence is that of Cytidylate kinase from Shewanella frigidimarina (strain NCIMB 400).